A 150-amino-acid chain; its full sequence is Peptide deformylase (150 aa).

Fe cation contacts are provided by Cys88 and His130. Glu131 is a catalytic residue. Position 134 (His134) interacts with Fe cation.

It belongs to the polypeptide deformylase family. It depends on Fe(2+) as a cofactor.

The enzyme catalyses N-terminal N-formyl-L-methionyl-[peptide] + H2O = N-terminal L-methionyl-[peptide] + formate. Functionally, removes the formyl group from the N-terminal Met of newly synthesized proteins. Requires at least a dipeptide for an efficient rate of reaction. N-terminal L-methionine is a prerequisite for activity but the enzyme has broad specificity at other positions. This is Peptide deformylase from Desulfitobacterium hafniense (strain Y51).